The sequence spans 105 residues: Phosphoribosyl-AMP cyclohydrolase (105 aa).

Asp72 contacts Mg(2+). A Zn(2+)-binding site is contributed by Cys73. The Mg(2+) site is built by Asp74 and Asp76. Residues Cys89 and Cys96 each contribute to the Zn(2+) site.

The protein belongs to the PRA-CH family. In terms of assembly, homodimer. Requires Mg(2+) as cofactor. It depends on Zn(2+) as a cofactor.

It localises to the cytoplasm. The enzyme catalyses 1-(5-phospho-beta-D-ribosyl)-5'-AMP + H2O = 1-(5-phospho-beta-D-ribosyl)-5-[(5-phospho-beta-D-ribosylamino)methylideneamino]imidazole-4-carboxamide. It functions in the pathway amino-acid biosynthesis; L-histidine biosynthesis; L-histidine from 5-phospho-alpha-D-ribose 1-diphosphate: step 3/9. In terms of biological role, catalyzes the hydrolysis of the adenine ring of phosphoribosyl-AMP. This Listeria monocytogenes serotype 4b (strain CLIP80459) protein is Phosphoribosyl-AMP cyclohydrolase.